We begin with the raw amino-acid sequence, 193 residues long: RNA polymerase sigma-H factor (193 aa).

Residues 49–62 (DVAQEAFIKAYRAL) carry the Polymerase core binding motif. Positions 157-176 (YEDIATVMQCPVGTVRSRIF) form a DNA-binding region, H-T-H motif.

It belongs to the sigma-70 factor family. ECF subfamily.

In terms of biological role, sigma factors are initiation factors that promote the attachment of RNA polymerase to specific initiation sites and are then released. This sigma factor regulates genes such as algD, involved in alginate biosynthesis. This is RNA polymerase sigma-H factor (algU) from Pseudomonas aeruginosa (strain ATCC 15692 / DSM 22644 / CIP 104116 / JCM 14847 / LMG 12228 / 1C / PRS 101 / PAO1).